A 211-amino-acid polypeptide reads, in one-letter code: Large ribosomal subunit protein uL4 (211 aa).

Residues 44-90 (ERQGTHSTLTKGEVRGGGKKPWRQKHTGKARTGSTRNPHWTGGGVVF) are disordered. Residues 60 to 72 (GGKKPWRQKHTGK) are compositionally biased toward basic residues.

The protein belongs to the universal ribosomal protein uL4 family. As to quaternary structure, part of the 50S ribosomal subunit.

One of the primary rRNA binding proteins, this protein initially binds near the 5'-end of the 23S rRNA. It is important during the early stages of 50S assembly. It makes multiple contacts with different domains of the 23S rRNA in the assembled 50S subunit and ribosome. Functionally, forms part of the polypeptide exit tunnel. The chain is Large ribosomal subunit protein uL4 from Ureaplasma urealyticum serovar 10 (strain ATCC 33699 / Western).